We begin with the raw amino-acid sequence, 303 residues long: Diaminopimelate epimerase (303 aa).

The substrate site is built by N15, Q47, and N67. C76 functions as the Proton donor in the catalytic mechanism. Residues G77 to N78, N163, N197, and E215 to R216 contribute to the substrate site. C224 serves as the catalytic Proton acceptor. Residue G225–S226 participates in substrate binding. A disordered region spans residues D279–A303.

It belongs to the diaminopimelate epimerase family. In terms of assembly, homodimer.

It is found in the cytoplasm. The catalysed reaction is (2S,6S)-2,6-diaminopimelate = meso-2,6-diaminopimelate. It participates in amino-acid biosynthesis; L-lysine biosynthesis via DAP pathway; DL-2,6-diaminopimelate from LL-2,6-diaminopimelate: step 1/1. In terms of biological role, catalyzes the stereoinversion of LL-2,6-diaminopimelate (L,L-DAP) to meso-diaminopimelate (meso-DAP), a precursor of L-lysine and an essential component of the bacterial peptidoglycan. This is Diaminopimelate epimerase from Brucella canis (strain ATCC 23365 / NCTC 10854 / RM-666).